The primary structure comprises 426 residues: Gamma-glutamyl phosphate reductase (426 aa).

It belongs to the gamma-glutamyl phosphate reductase family.

The protein localises to the cytoplasm. The catalysed reaction is L-glutamate 5-semialdehyde + phosphate + NADP(+) = L-glutamyl 5-phosphate + NADPH + H(+). Its pathway is amino-acid biosynthesis; L-proline biosynthesis; L-glutamate 5-semialdehyde from L-glutamate: step 2/2. Catalyzes the NADPH-dependent reduction of L-glutamate 5-phosphate into L-glutamate 5-semialdehyde and phosphate. The product spontaneously undergoes cyclization to form 1-pyrroline-5-carboxylate. The protein is Gamma-glutamyl phosphate reductase of Sorangium cellulosum (strain So ce56) (Polyangium cellulosum (strain So ce56)).